Consider the following 139-residue polypeptide: Endocuticle structural glycoprotein SgAbd-8 (139 aa).

A Pyrrolidone carboxylic acid modification is found at Gln1. The O-linked (HexNAc...) threonine glycan is linked to Thr14. O-linked (HexNAc...) serine glycosylation is present at Ser15. Residues 29–99 enclose the Chitin-binding type R&amp;R domain; sequence DGSYAWSYET…PEGAHLPTPP (71 aa). Thr97 carries an O-linked (HexNAc...) threonine glycan. Residues 111–139 are disordered; that stretch reads FIASQPQQPGNNGGGQFPRPQPFPRPGAF. Positions 129–139 are enriched in pro residues; it reads RPQPFPRPGAF.

Functionally, component of the abdominal endocuticle. This is Endocuticle structural glycoprotein SgAbd-8 from Schistocerca gregaria (Desert locust).